The following is a 128-amino-acid chain: CD59 glycoprotein (128 aa).

An N-terminal signal peptide occupies residues 1–25 (MGIQGGSVLFGLLLILAVFCHSGHS). Residues 26 to 108 (LQCYSCPYST…ILENGGTTLS (83 aa)) enclose the UPAR/Ly6 domain. 5 disulfide bridges follow: cysteine 28–cysteine 51, cysteine 31–cysteine 38, cysteine 44–cysteine 64, cysteine 70–cysteine 88, and cysteine 89–cysteine 94. A glycan (N-linked (GlcNAc...) asparagine) is linked at asparagine 43. Residue asparagine 102 is the site of GPI-anchor amidated asparagine attachment. Positions 103-128 (GGTTLSKKTVLLLVTPFLAAAWSLHP) are cleaved as a propeptide — removed in mature form.

Interacts with T-cell surface antigen CD2. Post-translationally, N- and O-glycosylated.

It localises to the cell membrane. The protein resides in the secreted. Potent inhibitor of the complement membrane attack complex (MAC) action, which protects self-cells from damage during complement activation. Acts by binding to the beta-haipins of C8 (C8A and C8B) components of the assembling MAC, forming an intermolecular beta-sheet that prevents incorporation of the multiple copies of C9 required for complete formation of the osmolytic pore. The protein is CD59 glycoprotein of Callithrix sp. (Marmoset).